The sequence spans 169 residues: MFDYQVSKHPHFDEACRAFALRHNLVQLAERAGMNVQILRNKLNPSQPHLLTAPEIWLLTDLTEDSTLVDGFLAQIHCLPCVPINEVAKEKLPHYVMSATAEIGRVAAGAVSGDVKTSAGRRDAISSINSVTRLMALAAVSLQARLQANPAMASAVDTVTGLGASFGLL.

The protein is Protein ORFb in retron Ec67 of Escherichia coli.